The primary structure comprises 251 residues: Imidazole glycerol phosphate synthase subunit HisF (251 aa).

Residues Asp11 and Asp130 contribute to the active site.

Belongs to the HisA/HisF family. As to quaternary structure, heterodimer of HisH and HisF.

The protein localises to the cytoplasm. It carries out the reaction 5-[(5-phospho-1-deoxy-D-ribulos-1-ylimino)methylamino]-1-(5-phospho-beta-D-ribosyl)imidazole-4-carboxamide + L-glutamine = D-erythro-1-(imidazol-4-yl)glycerol 3-phosphate + 5-amino-1-(5-phospho-beta-D-ribosyl)imidazole-4-carboxamide + L-glutamate + H(+). It functions in the pathway amino-acid biosynthesis; L-histidine biosynthesis; L-histidine from 5-phospho-alpha-D-ribose 1-diphosphate: step 5/9. IGPS catalyzes the conversion of PRFAR and glutamine to IGP, AICAR and glutamate. The HisF subunit catalyzes the cyclization activity that produces IGP and AICAR from PRFAR using the ammonia provided by the HisH subunit. The polypeptide is Imidazole glycerol phosphate synthase subunit HisF (Chlorobium luteolum (strain DSM 273 / BCRC 81028 / 2530) (Pelodictyon luteolum)).